The sequence spans 108 residues: Urease subunit beta (108 aa).

This sequence belongs to the urease beta subunit family. Heterotrimer of UreA (gamma), UreB (beta) and UreC (alpha) subunits. Three heterotrimers associate to form the active enzyme.

Its subcellular location is the cytoplasm. It catalyses the reaction urea + 2 H2O + H(+) = hydrogencarbonate + 2 NH4(+). It participates in nitrogen metabolism; urea degradation; CO(2) and NH(3) from urea (urease route): step 1/1. In Nocardia farcinica (strain IFM 10152), this protein is Urease subunit beta.